A 387-amino-acid polypeptide reads, in one-letter code: 8-amino-7-oxononanoate synthase (387 aa).

Arginine 20 contributes to the substrate binding site. 107-108 contributes to the pyridoxal 5'-phosphate binding site; it reads GY. Substrate is bound at residue histidine 132. Positions 181, 209, and 238 each coordinate pyridoxal 5'-phosphate. Lysine 241 bears the N6-(pyridoxal phosphate)lysine mark. Threonine 355 serves as a coordination point for substrate.

It belongs to the class-II pyridoxal-phosphate-dependent aminotransferase family. BioF subfamily. In terms of assembly, homodimer. The cofactor is pyridoxal 5'-phosphate.

The catalysed reaction is 6-carboxyhexanoyl-[ACP] + L-alanine + H(+) = (8S)-8-amino-7-oxononanoate + holo-[ACP] + CO2. It functions in the pathway cofactor biosynthesis; biotin biosynthesis. Catalyzes the decarboxylative condensation of pimeloyl-[acyl-carrier protein] and L-alanine to produce 8-amino-7-oxononanoate (AON), [acyl-carrier protein], and carbon dioxide. This Dechloromonas aromatica (strain RCB) protein is 8-amino-7-oxononanoate synthase.